The chain runs to 201 residues: Protein Thf1 (201 aa).

Positions 174–201 (IYKSSISKMEQAKELIQEQRIKDKKKTL) form a coiled coil.

It belongs to the THF1 family.

May be involved in photosynthetic membrane biogenesis. The chain is Protein Thf1 from Prochlorococcus marinus (strain MIT 9312).